Here is a 101-residue protein sequence, read N- to C-terminus: uncharacterized protein (101 aa).

Positions 1–17 (MKKAAVLAVVLSLGLAG) are cleaved as a signal peptide. Cys-18 is lipidated: N-palmitoyl cysteine. Residue Cys-18 is the site of S-diacylglycerol cysteine attachment.

It is found in the cell membrane. This is an uncharacterized protein from Pasteurella multocida (strain Pm70).